The primary structure comprises 515 residues: E3 ubiquitin-protein ligase RNF38 (515 aa).

A Bipartite nuclear localization signal 1 motif is present at residues 57 to 71 (DSPSPKRQRLSHSVF). Residues 73–141 (YTSASPAPSP…LSRHNSISQD (69 aa)) form a disordered region. Residues 89 to 104 (MTSNRQPPSVRPSQHH) show a composition bias toward polar residues. The short motif at 115–131 (RNRRSPPVRRQRGRRDR) is the Bipartite nuclear localization signal 2 element. Positions 115–134 (RNRRSPPVRRQRGRRDRLSR) are enriched in basic residues. Residues 463 to 504 (CVVCMCDFESRQLLRVLPCNHEFHAKCVDKWLKANRTCPICR) form an RING-type zinc finger.

In terms of tissue distribution, widely expressed with highest levels in testis.

It is found in the nucleus. It catalyses the reaction S-ubiquitinyl-[E2 ubiquitin-conjugating enzyme]-L-cysteine + [acceptor protein]-L-lysine = [E2 ubiquitin-conjugating enzyme]-L-cysteine + N(6)-ubiquitinyl-[acceptor protein]-L-lysine.. It participates in protein modification; protein ubiquitination. Its function is as follows. Acts as an E3 ubiquitin-protein ligase able to ubiquitinate p53/TP53 which promotes its relocalization to discrete foci associated with PML nuclear bodies. Exhibits preference for UBE2D2 as a E2 enzyme. The polypeptide is E3 ubiquitin-protein ligase RNF38 (Homo sapiens (Human)).